A 60-amino-acid chain; its full sequence is Large ribosomal subunit protein bL32 (60 aa).

Over residues 1–19 the composition is skewed to basic residues; the sequence is MGVPKRKTSKGRRDKRRAH. Residues 1–20 are disordered; that stretch reads MGVPKRKTSKGRRDKRRAHL.

This sequence belongs to the bacterial ribosomal protein bL32 family.

The protein is Large ribosomal subunit protein bL32 of Syntrophobacter fumaroxidans (strain DSM 10017 / MPOB).